Reading from the N-terminus, the 473-residue chain is DNA-binding protein (473 aa).

Disordered stretches follow at residues M1–H69 and R85–V111. A compositionally biased stretch (polar residues) spans E7–T18. The span at P53–V62 shows a compositional bias: acidic residues. Y141 is subject to Phosphotyrosine; by host. The Zn(2+) site is built by C230 and H232. A flexible loop region spans residues V243–L277. Positions 285, 301, 342, 344, 396, and 412 each coordinate Zn(2+). Positions V459–F473 are C-terminal arm, DBP binding.

This sequence belongs to the adenoviridae E2A DNA-binding protein family. As to quaternary structure, homomultimerizes on viral ssDNA bound to pTP. Forms a initiation complex with viral polymerase, pTP and hosts NFIA and POU2F1/OCT1. Interacts with host SRCAP.

The protein resides in the host nucleus. Functionally, plays a role in the elongation phase of viral strand displacement replication by unwinding the template in an ATP-independent fashion, employing its capacity to form multimers. Also enhances the rate of initiation. Released from template upon second strand synthesis. Assembles in complex with viral pTP, viral pol, host NFIA and host POU2F1/OCT1 on viral origin of replication. Covers the whole ssDNA genome during synthesis. The complementary strand synthesis induces its relese from DNA template. May inhibit cellular transcription mediated by the interaction between host SRCAP and CBP. This Homo sapiens (Human) protein is DNA-binding protein.